Here is a 440-residue protein sequence, read N- to C-terminus: uncharacterized protein (440 aa).

This is an uncharacterized protein from Rickettsia conorii (strain ATCC VR-613 / Malish 7).